A 365-amino-acid chain; its full sequence is MGSTGETQMTPTQVSDEEANLFAMQLASASVLPMVLKAAIELDLLEIMAKAGPGAFLSPNDLASQLPTKNPEAPVMLDRMLRLLASYSILTYSLRTLPDGKVERLYGLGPVCKFLTKNEDGVSIAALCLMNQDKVLVESWYHLKDAVLDGGIPFNKAYGMTAFDYHGTDPRFNKVFNKGMADHSTITMKKILETYKGFEGLTSIVDVGGGTGAVVNMIVSKYPSIKGINFDLPHVIEDAPQYPGVQHVGGDMFVSVPKGDAIFMKWICHDWSDEHCLKFLKNCYAALPDNGKVILGECILPVAPDTSLATKGVVHIDVVMLAHNPGGKERTEQEFEALAKGSGFQGIRVACNAFNTYVIEFLKKI.

Substrate is bound at residue 130-136; the sequence is MNQDKVL. The substrate binding stretch occupies residues 162 to 180; it reads AFDYHGTDPRFNKVFNKGM. Gly-208, Asp-231, Asp-251, Met-252, and Lys-265 together coordinate S-adenosyl-L-methionine. Residue His-269 is the Proton acceptor of the active site.

Belongs to the class I-like SAM-binding methyltransferase superfamily. Cation-independent O-methyltransferase family. COMT subfamily. As to quaternary structure, homodimer.

It catalyses the reaction (E)-caffeate + S-adenosyl-L-methionine = (E)-ferulate + S-adenosyl-L-homocysteine + H(+). Its pathway is aromatic compound metabolism; phenylpropanoid biosynthesis. Its function is as follows. Catalyzes the conversion of caffeic acid to ferulic acid and of 5-hydroxyferulic acid to sinapic acid. The resulting products may subsequently be converted to the corresponding alcohols that are incorporated into lignins. The protein is Caffeic acid 3-O-methyltransferase (COMT1) of Rosa chinensis (China rose).